We begin with the raw amino-acid sequence, 185 residues long: MINDIKKDAQERMTKSLEALGRNLAAIRTGRAHPSILDTVKVTAWGSEMPLNQVAAITVEDARTLKIVAHDKNLSAAIEKAILTSDLGLNPSSAGTTIRVPMPALTEETRKGYTKQASGVAEDAKVAVRNVRRDALADLKKLTKDKEISEDEERRAADEIQKLTDKFVAEVDAAFKAKEKDLMAV.

This sequence belongs to the RRF family.

The protein localises to the cytoplasm. In terms of biological role, responsible for the release of ribosomes from messenger RNA at the termination of protein biosynthesis. May increase the efficiency of translation by recycling ribosomes from one round of translation to another. The sequence is that of Ribosome-recycling factor from Pseudomonas putida (strain GB-1).